Here is an 870-residue protein sequence, read N- to C-terminus: Leucine--tRNA ligase (870 aa).

Positions 36–46 (PYPSGKIHLGH) match the 'HIGH' region motif. The 'KMSKS' region signature appears at 602–606 (KMSKS). Residue Lys605 participates in ATP binding.

It belongs to the class-I aminoacyl-tRNA synthetase family.

It is found in the cytoplasm. It catalyses the reaction tRNA(Leu) + L-leucine + ATP = L-leucyl-tRNA(Leu) + AMP + diphosphate. This chain is Leucine--tRNA ligase, found in Rickettsia akari (strain Hartford).